The following is a 609-amino-acid chain: UvrABC system protein C (609 aa).

The GIY-YIG domain occupies 16–94 (SSPGVYRMYD…IKQYMPKYNV (79 aa)). Positions 203 to 238 (QQVTKALVAKMEQAAVELNYEQAARYRDQITALRRV) constitute a UVR domain.

This sequence belongs to the UvrC family. As to quaternary structure, interacts with UvrB in an incision complex.

Its subcellular location is the cytoplasm. Its function is as follows. The UvrABC repair system catalyzes the recognition and processing of DNA lesions. UvrC both incises the 5' and 3' sides of the lesion. The N-terminal half is responsible for the 3' incision and the C-terminal half is responsible for the 5' incision. This chain is UvrABC system protein C, found in Shewanella piezotolerans (strain WP3 / JCM 13877).